The following is an 85-amino-acid chain: Large ribosomal subunit protein bL27 (85 aa).

This sequence belongs to the bacterial ribosomal protein bL27 family.

This chain is Large ribosomal subunit protein bL27, found in Ruthia magnifica subsp. Calyptogena magnifica.